An 812-amino-acid polypeptide reads, in one-letter code: Fibroblast growth factor receptor 1 (812 aa).

Residues 1–20 form the signal peptide; that stretch reads MFSGMSLLLWGVLLGAALSV. Residues 21–371 lie on the Extracellular side of the membrane; that stretch reads ARPPSTLPDE…PALLASPLQL (351 aa). The 94-residue stretch at 25–118 folds into the Ig-like C2-type 1 domain; that stretch reads STLPDEVAPK…YTVLCSVNVS (94 aa). Residues cysteine 54 and cysteine 100 are joined by a disulfide bond. N-linked (GlcNAc...) asparagine glycosylation is found at asparagine 76, asparagine 116, asparagine 133, asparagine 223, asparagine 236, asparagine 260, asparagine 292, asparagine 313, and asparagine 326. The segment at 121-153 is disordered; it reads LPSAEDDDEDDDNSSSEEKAAENSKPNRPLWSH. A compositionally biased stretch (acidic residues) spans 124-135; the sequence is AEDDDEDDDNSS. Ig-like C2-type domains are found at residues 154–242 and 251–353; these read PEKM…YQLD and PILQ…AWLT. The cysteines at positions 174 and 226 are disulfide-linked. Cysteine 273 and cysteine 337 are disulfide-bonded. A helical membrane pass occupies residues 372 to 393; that stretch reads EIIIYCTGAAFVSAMVVTIIIF. The Cytoplasmic segment spans residues 394-812; sequence KMKHPSKKSD…KYSNGGLKKR (419 aa). The residue at position 457 (tyrosine 457) is a Phosphotyrosine; by autocatalysis. A Protein kinase domain is found at 472–761; it reads LILGKPLGEG…LALSSNQEYL (290 aa). ATP contacts are provided by residues 478-484, lysine 508, 556-558, and asparagine 562; these read LGEGCFG and EYT. Phosphotyrosine; by autocatalysis is present on residues tyrosine 577 and tyrosine 579. The Proton acceptor role is filled by aspartate 617. 2 residues coordinate ATP: arginine 621 and aspartate 635. Tyrosine 647, tyrosine 648, tyrosine 724, and tyrosine 760 each carry phosphotyrosine; by autocatalysis. A disordered region spans residues 784–812; it reads SGEDSMFSHDPLPDEPCLPKYSNGGLKKR.

This sequence belongs to the protein kinase superfamily. Tyr protein kinase family. Fibroblast growth factor receptor subfamily. In terms of assembly, monomer. Homodimer after ligand binding. Interacts with il17rd. Autophosphorylated. Binding of FGF family members together with heparan sulfate proteoglycan or heparin promotes receptor dimerization and autophosphorylation on tyrosine residues. Autophosphorylation occurs in trans between the two FGFR molecules present in the dimer and proceeds in a highly ordered manner. Phosphotyrosine residues provide docking sites for interacting proteins and so are crucial for FGFR1 function and its regulation. Post-translationally, ubiquitinated. FGFR1 is rapidly ubiquitinated after autophosphorylation, leading to internalization and degradation. In terms of processing, N-glycosylated in the endoplasmic reticulum. The N-glycan chains undergo further maturation to an Endo H-resistant form in the Golgi apparatus.

Its subcellular location is the cell membrane. It localises to the nucleus. The protein localises to the cytoplasm. It is found in the cytosol. The protein resides in the cytoplasmic vesicle. The enzyme catalyses L-tyrosyl-[protein] + ATP = O-phospho-L-tyrosyl-[protein] + ADP + H(+). With respect to regulation, present in an inactive conformation in the absence of bound ligand. Ligand binding leads to dimerization and activation by sequential autophosphorylation on tyrosine residues. Its function is as follows. Tyrosine-protein kinase that acts as a cell-surface receptor for fibroblast growth factors and plays an essential role in the regulation of embryonic development, cell proliferation, differentiation and migration. Required for normal mesoderm patterning and normal skeletogenesis. Phosphorylates PLCG1, FRS2, GAB1 and SHB. Ligand binding leads to the activation of several signaling cascades. Activation of PLCG1 leads to the production of the cellular signaling molecules diacylglycerol and inositol-1,4,5-trisphosphate. Phosphorylation of FRS2 triggers recruitment of GRB2, GAB1, PIK3R1 and SOS1, and mediates activation of RAS, MAPK1/ERK2, MAPK3/ERK1 and the MAP kinase signaling pathway, as well as of the AKT1 signaling pathway. Promotes phosphorylation of SHC1, STAT1 and PTPN11/SHP2. In the nucleus, enhances RPS6KA1 and CREB1 activity and contributes to the regulation of transcription. FGFR1 signaling is down-regulated by ubiquitination, internalization and degradation. The polypeptide is Fibroblast growth factor receptor 1 (fgfr1) (Xenopus laevis (African clawed frog)).